The following is a 179-amino-acid chain: Large ribosomal subunit protein uL5 (179 aa).

Belongs to the universal ribosomal protein uL5 family. In terms of assembly, part of the 50S ribosomal subunit; part of the 5S rRNA/L5/L18/L25 subcomplex. Contacts the 5S rRNA and the P site tRNA. Forms a bridge to the 30S subunit in the 70S ribosome.

Functionally, this is one of the proteins that bind and probably mediate the attachment of the 5S RNA into the large ribosomal subunit, where it forms part of the central protuberance. In the 70S ribosome it contacts protein S13 of the 30S subunit (bridge B1b), connecting the 2 subunits; this bridge is implicated in subunit movement. Contacts the P site tRNA; the 5S rRNA and some of its associated proteins might help stabilize positioning of ribosome-bound tRNAs. This chain is Large ribosomal subunit protein uL5, found in Thiobacillus denitrificans (strain ATCC 25259 / T1).